A 349-amino-acid chain; its full sequence is D-arabinitol dehydrogenase 1 (349 aa).

Positions 46, 67, 97, 100, 103, 111, and 151 each coordinate Zn(2+).

The protein belongs to the zinc-containing alcohol dehydrogenase family. It depends on Zn(2+) as a cofactor.

It localises to the cell projection. The enzyme catalyses D-arabinitol + NADP(+) = D-xylulose + NADPH + H(+). It carries out the reaction D-arabinitol + NADP(+) = D-ribulose + NADPH + H(+). D-arabinitol dehydrogenase which mostly produces D-arabinitol in haustoria, the appendages of the parasitic fungus that penetrate the host's tissue and draws nutrients from it. D-arabinitol accumulation may serve as a carbohydrate storage compound. D-arabinitol is also capable of quenching reactive oxygen species involved in host plant defense reactions, thus providing protection for the rust fungus during the pathogenic interaction. The polypeptide is D-arabinitol dehydrogenase 1 (ARD1) (Uromyces fabae (Rust fungus)).